We begin with the raw amino-acid sequence, 477 residues long: Ribosomal RNA small subunit methyltransferase F (477 aa).

S-adenosyl-L-methionine contacts are provided by residues 125-131 (AAAPGSK), Glu-149, Asp-176, and Asp-194. Cys-247 (nucleophile) is an active-site residue.

Belongs to the class I-like SAM-binding methyltransferase superfamily. RsmB/NOP family.

It localises to the cytoplasm. The catalysed reaction is cytidine(1407) in 16S rRNA + S-adenosyl-L-methionine = 5-methylcytidine(1407) in 16S rRNA + S-adenosyl-L-homocysteine + H(+). Its function is as follows. Specifically methylates the cytosine at position 1407 (m5C1407) of 16S rRNA. This chain is Ribosomal RNA small subunit methyltransferase F, found in Klebsiella pneumoniae (strain 342).